Consider the following 216-residue polypeptide: Cytidylate kinase (216 aa).

10 to 18 (GPAAAGKST) lines the ATP pocket.

This sequence belongs to the cytidylate kinase family. Type 1 subfamily.

It localises to the cytoplasm. It catalyses the reaction CMP + ATP = CDP + ADP. It carries out the reaction dCMP + ATP = dCDP + ADP. This is Cytidylate kinase from Macrococcus caseolyticus (strain JCSC5402) (Macrococcoides caseolyticum).